An 86-amino-acid polypeptide reads, in one-letter code: Putative antitoxin VapB5 (86 aa).

Belongs to the phD/YefM antitoxin family. As to quaternary structure, forms a complex with VapC5.

Functionally, probable antitoxin component of a probable type II toxin-antitoxin (TA) system. The cognate toxin is VapC5. The sequence is that of Putative antitoxin VapB5 (vapB5) from Mycobacterium tuberculosis (strain CDC 1551 / Oshkosh).